Here is a 1209-residue protein sequence, read N- to C-terminus: Putative lysine-specific demethylase JMJ16 (1209 aa).

One can recognise a JmjN domain in the interval 146–187; that stretch reads APVFYPSEEEFEDTLNYIAKIRPEAEKYGICRIVPPPSWKPP. The Nuclear localization signal signature appears at 217 to 224; sequence MKKISKLP. In terms of domain architecture, JmjC spans 361 to 527; it reads KYAKSGWNLN…HGQIAIELYC (167 aa). Positions 407, 409, and 495 each coordinate Fe cation. Residues cysteine 617, cysteine 620, cysteine 631, cysteine 633, cysteine 640, histidine 643, cysteine 648, and cysteine 650 each coordinate Zn(2+). A C5HC2 zinc finger spans residues 617–667; that stretch reads CCICFFDLHLSAAGCRCSPEKYSCLTHVKELCSCPWVTKYFLFRYDIDELN. The segment at 872-900 is disordered; the sequence is DTRNTISLPTNDQKTMRRDVPSSTSHAEV. The segment covering 875 to 884 has biased composition (polar residues); it reads NTISLPTNDQ. One can recognise an FYR N-terminal domain in the interval 974–1032; that stretch reads VVRRINCNVEPLSYGCVLSGKSWCSRRAIFPKGFRSRVKYINILDPTNMCFYISEILDA. The FYR C-terminal domain occupies 1034–1124; it reads RNSPLFMVYL…RVCTDYWDSR (91 aa).

This sequence belongs to the JARID1 histone demethylase family. Interacts with MMD1 in the nucleus of male meiocytes, especially on pachytene chromosomes. The cofactor is Fe(2+). Confined to inflorescences.

It localises to the nucleus. It carries out the reaction N(6),N(6),N(6)-trimethyl-L-lysyl(4)-[histone H3] + 2-oxoglutarate + O2 = N(6),N(6)-dimethyl-L-lysyl(4)-[histone H3] + formaldehyde + succinate + CO2. The catalysed reaction is N(6),N(6)-dimethyl-L-lysyl(4)-[histone H3] + 2-oxoglutarate + O2 = N(6)-methyl-L-lysyl(4)-[histone H3] + formaldehyde + succinate + CO2. The enzyme catalyses N(6)-methyl-L-lysyl(4)-[histone H3] + 2-oxoglutarate + O2 = L-lysyl(4)-[histone H3] + formaldehyde + succinate + CO2. Its function is as follows. Functions as a histone H3 'Lys-4' (H3K4me) demethylase involved in the negative regulation of gene expression. Active on H3K4me1, H3K4me2 and H3K4me3. Not active on mono-, di- and trimethylated H3K9, H3K27 and H3K36 in somatic cells. However, also active on H3K9 when in complex with MMD1, a meiocyte-specific histone reader. Together with MMD1, promotes gene expression in male meiocytes in an H3K9me3-dependent manner, and contributes to meiotic chromosome condensation by triggering some condensin promoters (e.g. CAP-D3 and CAP-H). Together with JMJ14 and JMJ17, required for plant growth and development. Represses leaf senescence in an age-dependent manner by demethylating H3K4me3 activating histone marks at senescence-associated genes (SAGs) loci, including WRKY53 and SAG201, thus preventing their premature expression. This chain is Putative lysine-specific demethylase JMJ16, found in Arabidopsis thaliana (Mouse-ear cress).